Here is a 310-residue protein sequence, read N- to C-terminus: Prephenate dehydratase (310 aa).

Residues 3 to 190 (RIAYLGPEGT…ARTRFVLVGL (188 aa)) enclose the Prephenate dehydratase domain. The ACT domain occupies 204-281 (AVVLRLVNEP…VDVRYLGSWP (78 aa)).

Homodimer.

It carries out the reaction prephenate + H(+) = 3-phenylpyruvate + CO2 + H2O. Its pathway is amino-acid biosynthesis; L-phenylalanine biosynthesis; phenylpyruvate from prephenate: step 1/1. This is Prephenate dehydratase (pheA) from Mycolicibacterium smegmatis (strain ATCC 700084 / mc(2)155) (Mycobacterium smegmatis).